The primary structure comprises 249 residues: DNA polymerase sliding clamp (249 aa).

The protein belongs to the PCNA family. Homotrimer which circularizes head-to-tail (head is a N-terminus, tail is at C-terminus) to form a toroid. RFC opens the toroid so it can load on DNA. Interacts with both Pol I (pol) and Pol II (polB-polC), with Hel308 (hjm) and with Hjc. Interaction with the C-terminal PIP-box of RfcL may stabilize the toroidal structure.

Its function is as follows. Sliding clamp subunit that acts as a moving platform for DNA processing. Responsible for tethering the catalytic subunit of DNA polymerase to DNA during high-speed replication. Unlike its eukaryotic paralog, loads on circular DNA without the replication factor C (RFC) clamp loader, although RFC greatly increases loading efficiency. Stimulates the ATPase activity of replication factor C (RFC) in the presence of ssDNA. Stimulates the helicase activity of Hel308 and may alter its substrate specificity. This is DNA polymerase sliding clamp from Pyrococcus furiosus (strain ATCC 43587 / DSM 3638 / JCM 8422 / Vc1).